The primary structure comprises 117 residues: Putative membrane protein insertion efficiency factor (117 aa).

This sequence belongs to the UPF0161 family.

It is found in the cell inner membrane. Could be involved in insertion of integral membrane proteins into the membrane. In Bartonella bacilliformis (strain ATCC 35685 / KC583 / Herrer 020/F12,63), this protein is Putative membrane protein insertion efficiency factor.